We begin with the raw amino-acid sequence, 498 residues long: Glutamate--tRNA ligase (498 aa).

The short motif at 11–21 (PSPTGHLHIGN) is the 'HIGH' region element. The 'KMSKS' region signature appears at 260–264 (KLSKR). ATP is bound at residue Lys-263.

It belongs to the class-I aminoacyl-tRNA synthetase family. Glutamate--tRNA ligase type 1 subfamily. In terms of assembly, monomer.

Its subcellular location is the cytoplasm. The enzyme catalyses tRNA(Glu) + L-glutamate + ATP = L-glutamyl-tRNA(Glu) + AMP + diphosphate. In terms of biological role, catalyzes the attachment of glutamate to tRNA(Glu) in a two-step reaction: glutamate is first activated by ATP to form Glu-AMP and then transferred to the acceptor end of tRNA(Glu). In Leuconostoc citreum (strain KM20), this protein is Glutamate--tRNA ligase.